A 266-amino-acid chain; its full sequence is Glucosamine-6-phosphate deaminase (266 aa).

Aspartate 72 acts as the Proton acceptor; for enolization step in catalysis. Aspartate 141 serves as the catalytic For ring-opening step. Histidine 143 functions as the Proton acceptor; for ring-opening step in the catalytic mechanism. Glutamate 148 serves as the catalytic For ring-opening step.

This sequence belongs to the glucosamine/galactosamine-6-phosphate isomerase family. NagB subfamily. As to quaternary structure, homohexamer.

It carries out the reaction alpha-D-glucosamine 6-phosphate + H2O = beta-D-fructose 6-phosphate + NH4(+). The protein operates within amino-sugar metabolism; N-acetylneuraminate degradation; D-fructose 6-phosphate from N-acetylneuraminate: step 5/5. Allosterically activated by N-acetylglucosamine 6-phosphate (GlcNAc6P). Catalyzes the reversible isomerization-deamination of glucosamine 6-phosphate (GlcN6P) to form fructose 6-phosphate (Fru6P) and ammonium ion. The sequence is that of Glucosamine-6-phosphate deaminase from Vibrio campbellii (strain ATCC BAA-1116).